The primary structure comprises 328 residues: DNA-directed RNA polymerase subunit alpha (328 aa).

Residues 1–231 (MIYQMQMPAK…EHVTFFADFS (231 aa)) form an alpha N-terminal domain (alpha-NTD) region. The tract at residues 252–328 (MRKLFNTKIE…MDITKYQMKG (77 aa)) is alpha C-terminal domain (alpha-CTD).

It belongs to the RNA polymerase alpha chain family. As to quaternary structure, homodimer. The RNAP catalytic core consists of 2 alpha, 1 beta, 1 beta' and 1 omega subunit. When a sigma factor is associated with the core the holoenzyme is formed, which can initiate transcription.

It catalyses the reaction RNA(n) + a ribonucleoside 5'-triphosphate = RNA(n+1) + diphosphate. In terms of biological role, DNA-dependent RNA polymerase catalyzes the transcription of DNA into RNA using the four ribonucleoside triphosphates as substrates. The chain is DNA-directed RNA polymerase subunit alpha from Chlorobium limicola (strain DSM 245 / NBRC 103803 / 6330).